The primary structure comprises 289 residues: Phosphatidylglycerol--prolipoprotein diacylglyceryl transferase (289 aa).

3 helical membrane passes run 24–44, 70–90, and 111–131; these read GIAI…VYLL, GGVL…DWFL, and GING…LWLF. Arg158 is a binding site for a 1,2-diacyl-sn-glycero-3-phospho-(1'-sn-glycerol). Helical transmembrane passes span 219 to 239 and 253 to 273; these read GYLS…IEFF and FSMG…ILVW.

This sequence belongs to the Lgt family.

Its subcellular location is the cell inner membrane. The enzyme catalyses L-cysteinyl-[prolipoprotein] + a 1,2-diacyl-sn-glycero-3-phospho-(1'-sn-glycerol) = an S-1,2-diacyl-sn-glyceryl-L-cysteinyl-[prolipoprotein] + sn-glycerol 1-phosphate + H(+). The protein operates within protein modification; lipoprotein biosynthesis (diacylglyceryl transfer). Functionally, catalyzes the transfer of the diacylglyceryl group from phosphatidylglycerol to the sulfhydryl group of the N-terminal cysteine of a prolipoprotein, the first step in the formation of mature lipoproteins. In Chlorobaculum tepidum (strain ATCC 49652 / DSM 12025 / NBRC 103806 / TLS) (Chlorobium tepidum), this protein is Phosphatidylglycerol--prolipoprotein diacylglyceryl transferase.